Reading from the N-terminus, the 39-residue chain is Photosystem II reaction center protein Psb30 (39 aa).

The helical transmembrane segment at Ile-12–Leu-32 threads the bilayer.

The protein belongs to the Psb30/Ycf12 family. PSII is composed of 1 copy each of membrane proteins PsbA, PsbB, PsbC, PsbD, PsbE, PsbF, PsbH, PsbI, PsbJ, PsbK, PsbL, PsbM, PsbT, PsbX, PsbY, PsbZ, Psb30/Ycf12, peripheral proteins PsbO, CyanoQ (PsbQ), PsbU, PsbV and a large number of cofactors. It forms dimeric complexes.

The protein localises to the cellular thylakoid membrane. Its function is as follows. A core subunit of photosystem II (PSII), probably helps stabilize the reaction center. The chain is Photosystem II reaction center protein Psb30 from Microcystis aeruginosa (strain NIES-843 / IAM M-2473).